Reading from the N-terminus, the 873-residue chain is MAEMEKEGRPPENKRSRKPAHPVKREINEEMKNFAENTMNELLGWYGYDKVELKDGEDIEFRNYSADGESRQHISVLKENSLPKPKLPEDSVISPYNINTSYPGLATGNGLSDSPAGSKDHGNVPIIVPLIPPPFIKPPAEDDVSNVQIMCAWCQKVGIKRYSLSMGSEVKCFCSEKCFAACRRAYFKRNKARDEDGHAENFPQQHYAKETPRLAFKNNCELLVCDWCKHIRHTKEYLDFGDGERRLQFCSAKCLNQYKMDIFYKETQANLPAGLCSTLHPPVENKAEGTGVQLLTPDSWNIPLADARRKAPSPASAAGQIQGPGPSASTTASPSDTANCSVTKIPTPVPKPIPISENPNIPPVSVQPPASIVPPIGVPPRSPPMVMTNRGPVPLPIFMEQQIMQQIRPPFIRGPPHHASNPNSPLSNPMIPGIGPPPGGPRNMGPTSSPMHRPMLSPHIHPPTTPTMPGNPPGLLPPPPPGAPLPSLPFPPVSMMPNGPMPMPQMMNFGLPSLAPLVPPPTLLVPYPVIVPLPVPIPIPIPIPHINDSKPPSGFSSNGENFIPSNSSETPGGKPPNSSSSPRESKQGSSKPSDSSPSCSGQSLNQAQVLQEHSKNEVVDLTVRPSSPVNSKFGFPSVLQGPQDGVIDLTVGHRSRLHNVIHRALHAQVKVEREPNSVVNLAFGSSDKRNCSDCRDNCSPVDSKTLPCGDAAHCCPVSLASGTPGLEAGAAVCNVIVNGTKSTEGSKNPEPPQDPKKPQPPEELAVSELESVKENNCASNCHLEGDTGKKAGEEPLAGGDKQDPNLNNPADEDHAYALRMLPKTGCVIQPVPKPAEKTAIAPCIMSTPILSTGPEDLEPPLKRRCLRIRNQNK.

The segment covering 1–14 has biased composition (basic and acidic residues); sequence MAEMEKEGRPPENK. The disordered stretch occupies residues 1–26; the sequence is MAEMEKEGRPPENKRSRKPAHPVKRE. 2 FCS-type zinc fingers span residues 142–180 and 216–256; these read DDVS…KCFA and FKNN…KCLN. Disordered regions lie at residues 307-338, 413-485, 550-608, 742-766, and 779-811; these read ARRK…SDTA, RGPP…GAPL, KPPS…NQAQ, STEG…ELAV, and SNCH…NPAD. Residues 312–338 are compositionally biased toward low complexity; that stretch reads PSPASAAGQIQGPGPSASTTASPSDTA. Positions 460 to 485 are enriched in pro residues; sequence IHPPTTPTMPGNPPGLLPPPPPGAPL. The segment covering 554-570 has biased composition (polar residues); the sequence is GFSSNGENFIPSNSSET. Residues 571-603 are compositionally biased toward low complexity; the sequence is PGGKPPNSSSSPRESKQGSSKPSDSSPSCSGQS. Residues 783–793 are compositionally biased toward basic and acidic residues; the sequence is LEGDTGKKAGE.

It belongs to the SOBP family.

Implicated in development of the cochlea. This chain is Sine oculis-binding protein homolog, found in Gallus gallus (Chicken).